An 853-amino-acid polypeptide reads, in one-letter code: DNA mismatch repair protein MutS (853 aa).

Residue 614-621 (GPNMGGKS) coordinates ATP.

This sequence belongs to the DNA mismatch repair MutS family.

This protein is involved in the repair of mismatches in DNA. It is possible that it carries out the mismatch recognition step. This protein has a weak ATPase activity. The chain is DNA mismatch repair protein MutS from Escherichia coli (strain K12 / MC4100 / BW2952).